Consider the following 519-residue polypeptide: Lysine histidine transporter-like 8 (519 aa).

Residues 1–44 (MDERPETELISIPATPRVSTPEILTPSGQRSPRPATKPSSATWT) are disordered. The Cytoplasmic segment spans residues 1 to 114 (MDERPETELI…NLNAGVGFQA (114 aa)). The next 2 membrane-spanning stretches (helical) occupy residues 115-135 (LVLP…SLTI) and 136-156 (AYCW…AVPG). The Cytoplasmic portion of the chain corresponds to 157-176 (KRYNRYVELAQAAFGERLGV). A helical transmembrane segment spans residues 177 to 197 (WLALFPTVYLSAGTATALILI). Topologically, residues 198–217 (GGETMKLFFQIVCGPLCTSN) are extracellular. The helical transmembrane segment at 218–238 (PLTTVEWYLVFTSLCIVLSQL) threads the bilayer. Over 239–243 (PNLNS) the chain is Cytoplasmic. Residues 244-264 (IAGLSLIGAVTAITYSTMVWV) traverse the membrane as a helical segment. Residues 265-282 (LSVSQPRPATISYEPLSM) are Extracellular-facing. The helical transmembrane segment at 283 to 303 (PSTSGSLFAVLNALGIIAFAF) threads the bilayer. The Cytoplasmic portion of the chain corresponds to 304–333 (RGHNLVLEIQSTMPSTFKHPAHVPMWRGAK). Residues 334–354 (ISYFLIALCIFPISIGGFWAY) form a helical membrane-spanning segment. At 355–377 (GNLMPSGGMLAALYAFHIHDIPR) the chain is on the extracellular side. A helical transmembrane segment spans residues 378–398 (GLLATAFLLVVFSCLSSFQIY). The Cytoplasmic portion of the chain corresponds to 399 to 427 (SMPAFDSFEAGYTSRTNKPCSIWVRSGFR). A helical membrane pass occupies residues 428–448 (VFFGFVSFFIGVALPFLSSLA). A topological domain (extracellular) is located at residue Gly-449. A helical transmembrane segment spans residues 450-470 (LLGGLTLPVTFAYPCFMWVLI). The Cytoplasmic segment spans residues 471 to 485 (KKPAKYSFNWYFHWG). A helical membrane pass occupies residues 486–506 (LGWLGVAFSLAFSIGGIWSMV). The Extracellular segment spans residues 507 to 519 (TNGLKLKFFKPPN).

It belongs to the amino acid/polyamine transporter 2 family. Amino acid/auxin permease (AAAP) (TC 2.A.18.2) subfamily.

The protein localises to the cell membrane. In terms of biological role, amino acid transporter. This Arabidopsis thaliana (Mouse-ear cress) protein is Lysine histidine transporter-like 8 (AATL1).